A 371-amino-acid chain; its full sequence is 4-hydroxy-3-methylbut-2-en-1-yl diphosphate synthase (flavodoxin) (371 aa).

[4Fe-4S] cluster is bound by residues C270, C273, C305, and E312.

It belongs to the IspG family. It depends on [4Fe-4S] cluster as a cofactor.

The enzyme catalyses (2E)-4-hydroxy-3-methylbut-2-enyl diphosphate + oxidized [flavodoxin] + H2O + 2 H(+) = 2-C-methyl-D-erythritol 2,4-cyclic diphosphate + reduced [flavodoxin]. The protein operates within isoprenoid biosynthesis; isopentenyl diphosphate biosynthesis via DXP pathway; isopentenyl diphosphate from 1-deoxy-D-xylulose 5-phosphate: step 5/6. Converts 2C-methyl-D-erythritol 2,4-cyclodiphosphate (ME-2,4cPP) into 1-hydroxy-2-methyl-2-(E)-butenyl 4-diphosphate. This chain is 4-hydroxy-3-methylbut-2-en-1-yl diphosphate synthase (flavodoxin), found in Psychrobacter arcticus (strain DSM 17307 / VKM B-2377 / 273-4).